Consider the following 509-residue polypeptide: Maturase K (509 aa).

It belongs to the intron maturase 2 family. MatK subfamily.

Its subcellular location is the plastid. The protein resides in the chloroplast. In terms of biological role, usually encoded in the trnK tRNA gene intron. Probably assists in splicing its own and other chloroplast group II introns. The polypeptide is Maturase K (Nicotiana bigelovii (Bigelov's tobacco)).